Consider the following 319-residue polypeptide: CD2 antigen cytoplasmic tail-binding protein 2 homolog (319 aa).

Disordered regions lie at residues 1 to 57 (MASK…EDDV) and 105 to 124 (NAFD…KNEP). Basic and acidic residues predominate over residues 12–24 (KVKEESFKKHTLD). A phosphoserine mark is found at serine 25 and serine 30. Positions 25 to 47 (SDEEDSDDYEREYLNDSDIEGGE) are enriched in acidic residues. Tyrosine 37 is subject to Phosphotyrosine. Serine 41 carries the post-translational modification Phosphoserine. A compositionally biased stretch (basic and acidic residues) spans 109-124 (PAKDEENSSDEEKNEP). A GYF domain is found at 260–316 (EVTWEFKWSQDETDIQGPFSTEKMLKWSQENYFKNGVYVRKCGENTNFYTSNRIDFD).

The protein resides in the nucleus. Functionally, required for embryonic epithelial tissue repair, but not for the assembly of the actomyosin cable at the wound edge. Probably acts downstream of rl in the regulation of Ddc and msn transcription to promote wound healing. In Drosophila melanogaster (Fruit fly), this protein is CD2 antigen cytoplasmic tail-binding protein 2 homolog (holn1).